Here is a 370-residue protein sequence, read N- to C-terminus: Phosphoserine aminotransferase (370 aa).

At Met1 the chain carries N-acetylmethionine. O-phospho-L-serine is bound by residues His44 and Arg45. Lys51 bears the N6-acetyllysine mark. Residues Gly79, Cys80, and Trp107 each coordinate pyridoxal 5'-phosphate. Lys127 is modified (N6-acetyllysine). Pyridoxal 5'-phosphate-binding residues include Thr156, Asp176, and Gln199. Lys200 carries the post-translational modification N6-(pyridoxal phosphate)lysine. 2 residues coordinate pyridoxal 5'-phosphate: Asn241 and Thr242. N6-acetyllysine occurs at positions 269, 318, and 323. Residue Ser331 is modified to Phosphoserine. An N6-acetyllysine modification is found at Lys333. O-phospho-L-serine is bound by residues His335, Arg336, and Arg342.

It belongs to the class-V pyridoxal-phosphate-dependent aminotransferase family. SerC subfamily. As to quaternary structure, homodimer. Requires pyridoxal 5'-phosphate as cofactor. Expressed at high levels in the brain, liver, kidney and pancreas, and very weakly expressed in the thymus, prostate, testis and colon.

The enzyme catalyses O-phospho-L-serine + 2-oxoglutarate = 3-phosphooxypyruvate + L-glutamate. The protein operates within amino-acid biosynthesis; L-serine biosynthesis; L-serine from 3-phospho-D-glycerate: step 2/3. With respect to regulation, phosphoserine transaminase activity is strongly stimulated by increasing the ionic strength. In terms of biological role, involved in L-serine biosynthesis via the phosphorylated pathway, a three-step pathway converting the glycolytic intermediate 3-phospho-D-glycerate into L-serine. Catalyzes the second step, that is the pyridoxal 5'-phosphate-dependent transamination of 3-phosphohydroxypyruvate and L-glutamate to O-phosphoserine (OPS) and alpha-ketoglutarate. The chain is Phosphoserine aminotransferase from Homo sapiens (Human).